Here is a 259-residue protein sequence, read N- to C-terminus: Global transcriptional regulator CodY (259 aa).

A GAF domain region spans residues Met-1–Leu-155. Residues Ala-203–Arg-222 constitute a DNA-binding region (H-T-H motif). A Phosphoserine modification is found at Ser-215.

It belongs to the CodY family.

The protein resides in the cytoplasm. Its function is as follows. DNA-binding global transcriptional regulator which is involved in the adaptive response to starvation and acts by directly or indirectly controlling the expression of numerous genes in response to nutrient availability. During rapid exponential growth, CodY is highly active and represses genes whose products allow adaptation to nutrient depletion. The sequence is that of Global transcriptional regulator CodY from Bacillus pumilus (strain SAFR-032).